A 424-amino-acid polypeptide reads, in one-letter code: L-glutamine:2-deoxy-scyllo-inosose aminotransferase (424 aa).

Lys202 carries the post-translational modification N6-(pyridoxal phosphate)lysine.

Belongs to the DegT/DnrJ/EryC1 family. L-glutamine:2-deoxy-scyllo-inosose/scyllo-inosose aminotransferase subfamily. Pyridoxal 5'-phosphate is required as a cofactor.

It catalyses the reaction 2-deoxy-L-scyllo-inosose + L-glutamine = 2-deoxy-scyllo-inosamine + 2-oxoglutaramate. The catalysed reaction is 3-amino-2,3-dideoxy-scyllo-inosose + L-glutamine = 2-deoxystreptamine + 2-oxoglutaramate. Its pathway is metabolic intermediate biosynthesis; 2-deoxystreptamine biosynthesis; 2-deoxystreptamine from D-glucose 6-phosphate: step 2/4. The protein operates within metabolic intermediate biosynthesis; 2-deoxystreptamine biosynthesis; 2-deoxystreptamine from D-glucose 6-phosphate: step 4/4. It functions in the pathway antibiotic biosynthesis; ribostamycin biosynthesis. In terms of biological role, catalyzes the PLP-dependent transamination of 2-deoxy-scyllo-inosose (2-DOI) to form 2-deoxy-scyllo-inosamine (2-DOIA) using L-glutamine as the amino donor. Also catalyzes the transamination of 3-amino-2,3-dideoxy-scyllo-inosose (keto-2-DOIA) into 2-deoxystreptamine (2-DOS). This chain is L-glutamine:2-deoxy-scyllo-inosose aminotransferase (rbmB), found in Streptomyces ribosidificus.